The following is a 98-amino-acid chain: Gas vesicle protein J2 (98 aa).

A disordered region spans residues Ala-75 to Glu-98. Residues Asp-80–Asp-90 show a composition bias toward basic and acidic residues.

Belongs to the gas vesicle GvpA family. In terms of assembly, gvpF to GvpM interact with each other in vitro, and may form multi-subunit complex(es). Interacts with GvpA.

The protein localises to the gas vesicle. Its function is as follows. A minor component of the gas vesicle. Proteins GvpF to GvpM might be involved in nucleating gas vesicle formation. Gas vesicles are hollow, gas filled proteinaceous nanostructures found in several microbial planktonic microorganisms. They allow positioning of halobacteria at the optimal depth for growth in the poorly aerated, shallow brine pools of their habitat. In terms of biological role, expression of 2 c-vac DNA fragments containing 2 divergently transcribed regions (gvpE-gvpF-gvpG-gvpH-gvpI-gvpJ-gvpK-gvpL-gvpM and gvpA-gvpC-gvpN-gvpO) allows H.volcanii to produce gas vesicles. The polypeptide is Gas vesicle protein J2 (Halobacterium salinarum (strain ATCC 700922 / JCM 11081 / NRC-1) (Halobacterium halobium)).